Consider the following 121-residue polypeptide: Large ribosomal subunit protein uL22 (121 aa).

It belongs to the universal ribosomal protein uL22 family. As to quaternary structure, part of the 50S ribosomal subunit.

This protein binds specifically to 23S rRNA; its binding is stimulated by other ribosomal proteins, e.g. L4, L17, and L20. It is important during the early stages of 50S assembly. It makes multiple contacts with different domains of the 23S rRNA in the assembled 50S subunit and ribosome. In terms of biological role, the globular domain of the protein is located near the polypeptide exit tunnel on the outside of the subunit, while an extended beta-hairpin is found that lines the wall of the exit tunnel in the center of the 70S ribosome. This chain is Large ribosomal subunit protein uL22, found in Arthrobacter sp. (strain FB24).